A 357-amino-acid chain; its full sequence is MANNFTTPLATSHGNNCDLYAHHSTARVLMPLHYSLVFIIGLVGNLLALVVIVQNRKKINSTTLYSMNLVISDILFTTALPTRIAYYALGFDWRIGDALCRVTALVFYINTYAGVNFMTCLSIDRFFAVVHPLRYNKIKRIEYAKGVCLSVWILVFAQTLPLLLTPMSKEEGDKTTCMEYPNFEGTASLPWILLGACLLGYVLPITVILLCYSQICCKLFRTAKQNPLTEKSGVNKKALNTIILIIVVFILCFTPYHVAIIQHMIKMLCSPGALECGARHSFQISLHFTVCLMNFNCCMDPFIYFFACKGYKRKVMKMLKRQVSVSISSAVRSAPEENSREMTESQMMIHSKASNGR.

At 1–27 (MANNFTTPLATSHGNNCDLYAHHSTAR) the chain is on the extracellular side. Asparagine 4 is a glycosylation site (N-linked (GlcNAc...) asparagine). The chain crosses the membrane as a helical span at residues 28–53 (VLMPLHYSLVFIIGLVGNLLALVVIV). Residues 54–73 (QNRKKINSTTLYSMNLVISD) are Cytoplasmic-facing. The chain crosses the membrane as a helical span at residues 74–91 (ILFTTALPTRIAYYALGF). Arginine 83 is a binding site for 7alpha,25-dihydroxycholesterol. The Extracellular segment spans residues 92–101 (DWRIGDALCR). Cysteines 100 and 177 form a disulfide. The helical transmembrane segment at 102–123 (VTALVFYINTYAGVNFMTCLSI) threads the bilayer. Positions 108 and 112 each coordinate 7alpha,25-dihydroxycholesterol. The interval 122-130 (SIDRFFAVV) is interaction with G proteins. The Cytoplasmic portion of the chain corresponds to 124 to 145 (DRFFAVVHPLRYNKIKRIEYAK). A helical membrane pass occupies residues 146-164 (GVCLSVWILVFAQTLPLLL). At 165–188 (TPMSKEEGDKTTCMEYPNFEGTAS) the chain is on the extracellular side. A helical transmembrane segment spans residues 189-211 (LPWILLGACLLGYVLPITVILLC). At 212-237 (YSQICCKLFRTAKQNPLTEKSGVNKK) the chain is on the cytoplasmic side. The chain crosses the membrane as a helical span at residues 238-261 (ALNTIILIIVVFILCFTPYHVAII). Tyrosine 256 contributes to the 7alpha,25-dihydroxycholesterol binding site. Topologically, residues 262-283 (QHMIKMLCSPGALECGARHSFQ) are extracellular. Residues 284–308 (ISLHFTVCLMNFNCCMDPFIYFFAC) traverse the membrane as a helical segment. Over 309–357 (KGYKRKVMKMLKRQVSVSISSAVRSAPEENSREMTESQMMIHSKASNGR) the chain is Cytoplasmic. Phosphoserine is present on residues serine 324 and serine 345. Positions 336 to 357 (EENSREMTESQMMIHSKASNGR) are disordered. The segment covering 344–357 (ESQMMIHSKASNGR) has biased composition (polar residues).

Belongs to the G-protein coupled receptor 1 family. Homodimer and heterodimer. Heterodimerizes with CXCR5; leading to modulate the interaction between of CXCL13 and CXCR5. As to expression, expressed in mature B-cells and increases in expression early after activation, before being down-regulated in germinal center B-cells. Expressed in astrocytes. Specifically expressed in CD4(+) dendritic cells but not in CD8(+) dendritic cells. Expressed in monocyte/osteoclasts precursors and mature osteoclasts.

It localises to the cell membrane. In terms of biological role, G-protein coupled receptor expressed in lymphocytes that acts as a chemotactic receptor for B-cells, T-cells, splenic dendritic cells, monocytes/macrophages and astrocytes. Receptor for oxysterol 7-alpha,25-dihydroxycholesterol (7-alpha,25-OHC) and other related oxysterols. Mediates cell positioning and movement of a number of cells by binding the 7-alpha,25-OHC ligand that forms a chemotactic gradient. Binding of 7-alpha,25-OHC mediates the correct localization of B-cells during humoral immune responses. Collaborates with CXCR5 to mediate B-cell migration; probably by forming a heterodimer with CXCR5 that affects the interaction between of CXCL13 and CXCR5. Guides B-cell movement along the B-cell zone-T-cell zone boundary and later to interfollicular and outer follicular regions. Its specific expression during B-cell maturation helps position B-cells appropriately for mounting T-dependent antibody responses. Also acts as a chemotactic receptor for some T-cells upon binding to 7-alpha,25-OHC ligand. Promotes follicular helper T (Tfh) cells differentiation by positioning activated T-cells at the follicle-T-zone interface, promoting contact of newly activated CD4 T-cells with activated dendritic cells and exposing them to Tfh-cell-promoting inducible costimulator (ICOS) ligand. Expression in splenic dendritic cells is required for their homeostasis, localization and ability to induce B- and T-cell responses: GPR183 acts as a chemotactic receptor in dendritic cells that mediates the accumulation of CD4(+) dendritic cells in bridging channels. Regulates migration of astrocytes and is involved in communication between astrocytes and macrophages. Promotes osteoclast precursor migration to bone surfaces. Signals constitutively through G(i)-alpha, but not G(s)-alpha or G(q)-alpha. Signals constitutively also via MAPK1/3 (ERK1/2). The protein is G-protein coupled receptor 183 of Mus musculus (Mouse).